Here is a 245-residue protein sequence, read N- to C-terminus: NAD(P)H-hydrate epimerase (245 aa).

Residues 16-224 form the YjeF N-terminal domain; that stretch reads AAALDAELMA…HIADKYDLEV (209 aa). Position 68–72 (68–72) interacts with (6S)-NADPHX; the sequence is NNGGD. K(+) is bound by residues asparagine 69 and aspartate 131. (6S)-NADPHX-binding positions include 135-141 and aspartate 164; that span reads GFSFKPP. Residue serine 167 coordinates K(+).

It belongs to the NnrE/AIBP family. Requires K(+) as cofactor.

It localises to the cytoplasm. Its subcellular location is the mitochondrion. The enzyme catalyses (6R)-NADHX = (6S)-NADHX. It catalyses the reaction (6R)-NADPHX = (6S)-NADPHX. In terms of biological role, catalyzes the epimerization of the S- and R-forms of NAD(P)HX, a damaged form of NAD(P)H that is a result of enzymatic or heat-dependent hydration. This is a prerequisite for the S-specific NAD(P)H-hydrate dehydratase to allow the repair of both epimers of NAD(P)HX. This is NAD(P)H-hydrate epimerase from Yarrowia lipolytica (strain CLIB 122 / E 150) (Yeast).